The sequence spans 286 residues: ATP synthase gamma chain (286 aa).

It belongs to the ATPase gamma chain family. F-type ATPases have 2 components, CF(1) - the catalytic core - and CF(0) - the membrane proton channel. CF(1) has five subunits: alpha(3), beta(3), gamma(1), delta(1), epsilon(1). CF(0) has three main subunits: a, b and c.

Its subcellular location is the cell membrane. Produces ATP from ADP in the presence of a proton gradient across the membrane. The gamma chain is believed to be important in regulating ATPase activity and the flow of protons through the CF(0) complex. The chain is ATP synthase gamma chain from Ureaplasma urealyticum serovar 10 (strain ATCC 33699 / Western).